Consider the following 128-residue polypeptide: Large ribosomal subunit protein bL12 (128 aa).

The protein belongs to the bacterial ribosomal protein bL12 family. Homodimer. Part of the ribosomal stalk of the 50S ribosomal subunit. Forms a multimeric L10(L12)X complex, where L10 forms an elongated spine to which 2 to 4 L12 dimers bind in a sequential fashion. Binds GTP-bound translation factors.

Its function is as follows. Forms part of the ribosomal stalk which helps the ribosome interact with GTP-bound translation factors. Is thus essential for accurate translation. The chain is Large ribosomal subunit protein bL12 from Corynebacterium kroppenstedtii (strain DSM 44385 / JCM 11950 / CIP 105744 / CCUG 35717).